A 529-amino-acid chain; its full sequence is Probable cytochrome P450 6t1 (529 aa).

Cys-472 contacts heme.

Belongs to the cytochrome P450 family. Heme is required as a cofactor.

Its subcellular location is the endoplasmic reticulum membrane. The protein resides in the microsome membrane. May be involved in the metabolism of insect hormones and in the breakdown of synthetic insecticides. The polypeptide is Probable cytochrome P450 6t1 (Cyp6t1) (Drosophila melanogaster (Fruit fly)).